The primary structure comprises 463 residues: Chromosomal replication initiator protein DnaA (463 aa).

The segment at 1-83 is domain I, interacts with DnaA modulators; the sequence is MSTNQIILTD…LQLFQHYNNT (83 aa). A domain II region spans residues 83–124; sequence TIKSIEIITKELPGTTQTVTELPTKTFADIGSSELNSENIFS. The interval 125-343 is domain III, AAA+ region; that stretch reads TLDVRFTFDN…GALNKVIAHS (219 aa). The ATP site is built by glycine 171, glycine 173, lysine 174, and threonine 175. Residues 344-463 are domain IV, binds dsDNA; the sequence is NFTLKEITLE…INLLMKILQN (120 aa).

The protein belongs to the DnaA family. As to quaternary structure, oligomerizes as a right-handed, spiral filament on DNA at oriC.

The protein resides in the cytoplasm. Its function is as follows. Plays an essential role in the initiation and regulation of chromosomal replication. ATP-DnaA binds to the origin of replication (oriC) to initiate formation of the DNA replication initiation complex once per cell cycle. Binds the DnaA box (a 9 base pair repeat at the origin) and separates the double-stranded (ds)DNA. Forms a right-handed helical filament on oriC DNA; dsDNA binds to the exterior of the filament while single-stranded (ss)DNA is stabiized in the filament's interior. The ATP-DnaA-oriC complex binds and stabilizes one strand of the AT-rich DNA unwinding element (DUE), permitting loading of DNA polymerase. After initiation quickly degrades to an ADP-DnaA complex that is not apt for DNA replication. Binds acidic phospholipids. This Rickettsia conorii (strain ATCC VR-613 / Malish 7) protein is Chromosomal replication initiator protein DnaA.